The sequence spans 224 residues: Deoxyribose-phosphate aldolase (224 aa).

D92 acts as the Proton donor/acceptor in catalysis. The Schiff-base intermediate with acetaldehyde role is filled by K155. Catalysis depends on K184, which acts as the Proton donor/acceptor.

It belongs to the DeoC/FbaB aldolase family. DeoC type 1 subfamily.

It is found in the cytoplasm. The enzyme catalyses 2-deoxy-D-ribose 5-phosphate = D-glyceraldehyde 3-phosphate + acetaldehyde. It participates in carbohydrate degradation; 2-deoxy-D-ribose 1-phosphate degradation; D-glyceraldehyde 3-phosphate and acetaldehyde from 2-deoxy-alpha-D-ribose 1-phosphate: step 2/2. Functionally, catalyzes a reversible aldol reaction between acetaldehyde and D-glyceraldehyde 3-phosphate to generate 2-deoxy-D-ribose 5-phosphate. The protein is Deoxyribose-phosphate aldolase of Clostridium perfringens (strain 13 / Type A).